A 356-amino-acid polypeptide reads, in one-letter code: MEILEEKPKEGKIKIKAETLDDLWHLYHIISEGDVVYAKTLRKQAQRSDSLRPEKVEAVPVFLGIKAEKINLHRFANQLRITGPIIYASREDVPLGRYHTLTVEPGTVITIQKEKWKNYHIERLKEAIESSKKARVMIVAIEDGEAEIAIVREYGLDFVGSITYNISGKRYNIKRDDEEKKFFHEVAKSMEELMKRENIEKAIVAGPGFYKENFVNFLRENYPELAKKVVTDDTSMGGRTGIYEVIKRGTVDKVYTESRISKEIKLVEKVIEEIAKNGLVAYGLKEVEEATNYGAVETLIVLDSLLKGELREKIEELMELARNLRASVVVVSSEHEGGDKLKALGGIAALLRFKIK.

It belongs to the eukaryotic release factor 1 family. Pelota subfamily. As to quaternary structure, monomer. The cofactor is a divalent metal cation.

The protein localises to the cytoplasm. Functionally, may function in recognizing stalled ribosomes, interact with stem-loop structures in stalled mRNA molecules, and effect endonucleolytic cleavage of the mRNA. May play a role in the release non-functional ribosomes and degradation of damaged mRNAs. Has endoribonuclease activity. In Pyrococcus furiosus (strain ATCC 43587 / DSM 3638 / JCM 8422 / Vc1), this protein is Protein pelota homolog.